We begin with the raw amino-acid sequence, 305 residues long: Sulfate adenylyltransferase subunit 2 (305 aa).

The protein belongs to the PAPS reductase family. CysD subfamily. Heterodimer composed of CysD, the smaller subunit, and CysN.

The catalysed reaction is sulfate + ATP + H(+) = adenosine 5'-phosphosulfate + diphosphate. It participates in sulfur metabolism; hydrogen sulfide biosynthesis; sulfite from sulfate: step 1/3. Functionally, with CysN forms the ATP sulfurylase (ATPS) that catalyzes the adenylation of sulfate producing adenosine 5'-phosphosulfate (APS) and diphosphate, the first enzymatic step in sulfur assimilation pathway. APS synthesis involves the formation of a high-energy phosphoric-sulfuric acid anhydride bond driven by GTP hydrolysis by CysN coupled to ATP hydrolysis by CysD. The sequence is that of Sulfate adenylyltransferase subunit 2 from Pseudomonas putida (strain ATCC 700007 / DSM 6899 / JCM 31910 / BCRC 17059 / LMG 24140 / F1).